The sequence spans 81 residues: Photosystem I iron-sulfur center (81 aa).

2 4Fe-4S ferredoxin-type domains span residues 2–31 (SHSVKIYDTCIGCTQCVRACPTDVLEMIPW) and 39–68 (IASAPRTEDCVGCKRCESACPTDFLSVRVY). Residues C11, C14, C17, C21, C48, C51, C54, and C58 each contribute to the [4Fe-4S] cluster site.

The eukaryotic PSI reaction center is composed of at least 11 subunits. Requires [4Fe-4S] cluster as cofactor.

It localises to the plastid. The protein resides in the chloroplast thylakoid membrane. The enzyme catalyses reduced [plastocyanin] + hnu + oxidized [2Fe-2S]-[ferredoxin] = oxidized [plastocyanin] + reduced [2Fe-2S]-[ferredoxin]. Functionally, apoprotein for the two 4Fe-4S centers FA and FB of photosystem I (PSI); essential for photochemical activity. FB is the terminal electron acceptor of PSI, donating electrons to ferredoxin. The C-terminus interacts with PsaA/B/D and helps assemble the protein into the PSI complex. Required for binding of PsaD and PsaE to PSI. PSI is a plastocyanin-ferredoxin oxidoreductase, converting photonic excitation into a charge separation, which transfers an electron from the donor P700 chlorophyll pair to the spectroscopically characterized acceptors A0, A1, FX, FA and FB in turn. This is Photosystem I iron-sulfur center from Triticum aestivum (Wheat).